The following is a 160-amino-acid chain: Endoribonuclease YbeY (160 aa).

Zn(2+)-binding residues include His-125, His-129, and His-135.

The protein belongs to the endoribonuclease YbeY family. It depends on Zn(2+) as a cofactor.

It localises to the cytoplasm. Functionally, single strand-specific metallo-endoribonuclease involved in late-stage 70S ribosome quality control and in maturation of the 3' terminus of the 16S rRNA. The chain is Endoribonuclease YbeY from Leuconostoc mesenteroides subsp. mesenteroides (strain ATCC 8293 / DSM 20343 / BCRC 11652 / CCM 1803 / JCM 6124 / NCDO 523 / NBRC 100496 / NCIMB 8023 / NCTC 12954 / NRRL B-1118 / 37Y).